The primary structure comprises 527 residues: EGF domain-specific O-linked N-acetylglucosamine transferase (527 aa).

An N-terminal signal peptide occupies residues 1 to 17; sequence MLKLLVLGVLLHDVSLS. Positions 295-297 match the Required for optimal activity motif; the sequence is DYD. The N-linked (GlcNAc...) asparagine glycan is linked to Asn354. Residues 524–527 carry the Prevents secretion from ER motif; the sequence is RDEL.

It belongs to the glycosyltransferase 61 family.

Its subcellular location is the endoplasmic reticulum lumen. The enzyme catalyses L-seryl-[protein] + UDP-N-acetyl-alpha-D-glucosamine = 3-O-(N-acetyl-beta-D-glucosaminyl)-L-seryl-[protein] + UDP + H(+). It carries out the reaction L-threonyl-[protein] + UDP-N-acetyl-alpha-D-glucosamine = 3-O-(N-acetyl-beta-D-glucosaminyl)-L-threonyl-[protein] + UDP + H(+). Catalyzes the transfer of a single N-acetylglucosamine from UDP-GlcNAc to a serine or threonine residue in extracellular proteins resulting in their modification with a beta-linked N-acetylglucosamine (O-GlcNAc). Specifically glycosylates the Thr residue located between the fifth and sixth conserved cysteines of folded EGF-like domains. The chain is EGF domain-specific O-linked N-acetylglucosamine transferase (EOGT) from Canis lupus familiaris (Dog).